We begin with the raw amino-acid sequence, 833 residues long: Urease (833 aa).

A Urease domain is found at 395 to 833 (GALDVHVHYI…LPLTKRYFVY (439 aa)). 2 residues coordinate Ni(2+): His-400 and His-402. His-402 and Ala-433 together coordinate urea. Lys-483 contributes to the Ni(2+) binding site. An N6-carboxylysine modification is found at Lys-483. Urea contacts are provided by His-485 and His-512. 2 residues coordinate Ni(2+): His-512 and His-538. The active-site Proton donor is His-586. Residue Asp-626 participates in Ni(2+) binding. Ala-629 serves as a coordination point for urea.

In the C-terminal section; belongs to the metallo-dependent hydrolases superfamily. Urease alpha subunit family. Homohexamer. Requires Ni(2+) as cofactor. Post-translationally, carboxylation allows a single lysine to coordinate two nickel ions.

It carries out the reaction urea + 2 H2O + H(+) = hydrogencarbonate + 2 NH4(+). It participates in nitrogen metabolism; urea degradation; CO(2) and NH(3) from urea (urease route): step 1/1. Its activity is regulated as follows. The urease accessory proteins URE4, URE6 and URE7 are required for urease activity, URE7 supplying nickel for the functional urease. Its function is as follows. Plays a nutritional role via nitrogen acquisition in the environment. Contributes to the central nervous system invasion by enhancing yeast sequestration within microcapillary beds (such as within the brain) during hematogenous spread, thereby facilitating blood-to-brain invasion by C.neoformans. Affects fitness within the mammalian phagosome, promoting non-lytic exocytosis while delaying intracellular replication and thus reducing phagolysosomal membrane damage, events that could facilitate cryptococcal dissemination when transported inside macrophages. Urease activity is also associated with the regulation of key intracellular metabolic pathways, including melanin biosynthesis, polyamine biosynthesis, as well as intracellular levels of proline and reactive oxygen species. The chain is Urease from Cryptococcus neoformans var. neoformans serotype D (strain B-3501A) (Filobasidiella neoformans).